A 335-amino-acid chain; its full sequence is HTH-type transcriptional regulator RipA (335 aa).

The HTH araC/xylS-type domain occupies 119-216 (RKVAQKLIAY…GDTPSSFTSP (98 aa)). DNA-binding regions (H-T-H motif) lie at residues 136-157 (LEFAQLHNISSRTLQRQFVAST) and 183-206 (IGQVSQMVGFSATSSLTRAFKRHT).

Functionally, under iron limitation, represses the acn (aconitase), catA (catechol 1,2 dioxygenase), leuCD (isopropylmalate dehydratase), narKGHJI (nitrite/nitrate transporter and nitrate reductase), sdhCAB (succinate dehydrogenase), pta (phosphotransacetylase) and katA (catalase) genes. This Corynebacterium diphtheriae (strain ATCC 700971 / NCTC 13129 / Biotype gravis) protein is HTH-type transcriptional regulator RipA.